The chain runs to 630 residues: Terpinolene synthase, chloroplastic (630 aa).

The N-terminal 52 residues, 1 to 52, are a transit peptide targeting the chloroplast; sequence MALVSILPLSSKSVLHKSWIVSTYEHKAISRTIPNLGLRGRGKSVTHSLRMS. Mg(2+)-binding residues include D381, D385, N525, and D533. Positions 381 to 385 match the DDXXD motif motif; that stretch reads DDIYD.

This sequence belongs to the terpene synthase family. Tpsd subfamily. Mg(2+) is required as a cofactor. Requires Mn(2+) as cofactor. The cofactor is K(+).

It is found in the plastid. It localises to the chloroplast. It carries out the reaction (2E)-geranyl diphosphate = terpinolene + diphosphate. It participates in terpene metabolism; oleoresin biosynthesis. Involved in defensive oleoresin formation in conifers in response to insect attack or other injury. Involved in monoterpene (C10) olefins biosynthesis. The protein is Terpinolene synthase, chloroplastic (ag9) of Abies grandis (Grand fir).